Here is a 495-residue protein sequence, read N- to C-terminus: Trimethylamine methyltransferase MttB (495 aa).

Position 334 (O334) is a non-standard amino acid, pyrrolysine.

The protein belongs to the trimethylamine methyltransferase family.

The enzyme catalyses Co(I)-[trimethylamine-specific corrinoid protein] + trimethylamine + H(+) = methyl-Co(III)-[trimethylamine-specific corrinoid protein] + dimethylamine. It functions in the pathway one-carbon metabolism; methanogenesis from trimethylamine. Catalyzes the transfer of a methyl group from trimethylamine to the corrinoid cofactor of MttC. The protein is Trimethylamine methyltransferase MttB (mttB) of Methanosarcina barkeri (strain Fusaro / DSM 804).